The sequence spans 701 residues: SH3 domain-binding protein 1 (701 aa).

Positions 1–10 are enriched in basic residues; it reads MMKRQLHRMR. Disordered regions lie at residues 1–23 and 160–182; these read MMKR…RTPE and SQAT…HSHT. The tract at residues 1-275 is interaction with CGNL1; the sequence is MMKRQLHRMR…TATHFPRVYG (275 aa). Residues 17–262 form the BAR domain; sequence SLGRTPETAE…RENHGQADHS (246 aa). A phosphoserine mark is found at S175, S241, S262, and S264. A Rho-GAP domain is found at 276 to 469; it reads VSLATHLQEL…ALIQSADTLF (194 aa). Residues 470 to 701 are interaction with CD2AP; sequence PGDINFNVSG…RPRSLASETN (232 aa). Positions 496–701 are disordered; that stretch reads SEELPSTAVP…RPRSLASETN (206 aa). The span at 508–522 shows a compositional bias: pro residues; it reads ATTPAPAPAPAPAPA. Phosphoserine occurs at positions 544 and 550. 2 stretches are compositionally biased toward pro residues: residues 570-579 and 587-596; these read PARPTMPPPQ and PPAPPLPPGS. Position 601 is a phosphothreonine (T601). Positions 616–625 match the SH3-binding motif; sequence APTVPPPLPP. Pro residues-rich tracts occupy residues 618-630 and 641-652; these read TVPP…PPQP and SPSPASPGPASP. At T626 the chain carries Phosphothreonine. S653 bears the Phosphoserine mark. The segment covering 666-677 has biased composition (low complexity); sequence GAATAEGGAPEA. Over residues 682-692 the composition is skewed to pro residues; the sequence is PTPPAIPPQPR.

In terms of assembly, interacts with RAC1. Interacts with the exocyst via EXOC4 and EXOC8; required for the localization of both SH3BP1 and the exocyst to the leading edge of migrating cells. Interacts with CD2AP and CGNL1; probably part of a complex at cell junctions. Interacts with CAPZA1; recruits CAPZA1 to forming cell junctions. May interact with AFDN. Interacts with PLXND1; they dissociate upon SEMA3E binding to PLXND1 allowing SH3BP1 to transduce downstream signal through RAC1 inactivation. Interacts with ABL1, GRB2 and SRC (via SH3 domain).

The protein resides in the cell projection. It is found in the cell junction. It localises to the tight junction. Its subcellular location is the adherens junction. The protein localises to the phagocytic cup. The protein resides in the nucleus. It is found in the cytoplasm. It localises to the cytosol. In terms of biological role, GTPase activating protein (GAP) which specifically converts GTP-bound Rho-type GTPases including RAC1 and CDC42 in their inactive GDP-bound form. By specifically inactivating RAC1 at the leading edge of migrating cells, it regulates the spatiotemporal organization of cell protrusions which is important for proper cell migration. Also negatively regulates CDC42 in the process of actin remodeling and the formation of epithelial cell junctions. Through its GAP activity toward RAC1 and/or CDC42 plays a specific role in phagocytosis of large particles. Specifically recruited by a PI3 kinase/PI3K-dependent mechanism to sites of large particles engagement, inactivates RAC1 and/or CDC42 allowing the reorganization of the underlying actin cytoskeleton required for engulfment. It also plays a role in angiogenesis and the process of repulsive guidance as part of a semaphorin-plexin signaling pathway. Following the binding of PLXND1 to extracellular SEMA3E it dissociates from PLXND1 and inactivates RAC1, inducing the intracellular reorganization of the actin cytoskeleton and the collapse of cells. This chain is SH3 domain-binding protein 1, found in Homo sapiens (Human).